Consider the following 298-residue polypeptide: MLDKLTTELRNEKTMNLDEMNTIEILTAMNEEDHRVPQQIAQALPAIAPLVEETIKAMKQGGRLIYVGAGTSGRLGVLDAAECPPTFGVAPDRVIGLIAGGEKAFIEAKEGAEDDEGLGEADLKKIQLTVRDVVVGIAASGRTPYVIGALKYANQVGAVTGSLACNRGAAISRIATYPIEVETGSEVLTGSTRLKAGTAQKLVLNMISTTVMIGLGKAYKNLMVDLKPTNEKLRERSKRIIMEATDVEAAVAEKHLREAGGVVKVAIITILTGCSVDQAQMTLDRNGGFIRKAVHELN.

Residues 54 to 217 (TIKAMKQGGR…STTVMIGLGK (164 aa)) enclose the SIS domain. Glutamate 82 serves as the catalytic Proton donor. The active site involves glutamate 113.

This sequence belongs to the GCKR-like family. MurNAc-6-P etherase subfamily. Homodimer.

The catalysed reaction is N-acetyl-D-muramate 6-phosphate + H2O = N-acetyl-D-glucosamine 6-phosphate + (R)-lactate. It participates in amino-sugar metabolism; N-acetylmuramate degradation. Its function is as follows. Specifically catalyzes the cleavage of the D-lactyl ether substituent of MurNAc 6-phosphate, producing GlcNAc 6-phosphate and D-lactate. This chain is N-acetylmuramic acid 6-phosphate etherase, found in Halalkalibacterium halodurans (strain ATCC BAA-125 / DSM 18197 / FERM 7344 / JCM 9153 / C-125) (Bacillus halodurans).